Consider the following 260-residue polypeptide: Large ribosomal subunit protein eL8A (260 aa).

Residues 1–34 form a disordered region; it reads MPSSKKVAPAPLATKSKASTSTKNPLFESTPKNF.

It belongs to the eukaryotic ribosomal protein eL8 family. Component of the large ribosomal subunit. Mature ribosomes consist of a small (40S) and a large (60S) subunit. The 40S subunit contains about 32 different proteins and 1 molecule of RNA (18S). The 60S subunit contains 45 different proteins and 3 molecules of RNA (25S, 5.8S and 5S).

It localises to the cytoplasm. Component of the ribosome, a large ribonucleoprotein complex responsible for the synthesis of proteins in the cell. The small ribosomal subunit (SSU) binds messenger RNAs (mRNAs) and translates the encoded message by selecting cognate aminoacyl-transfer RNA (tRNA) molecules. The large subunit (LSU) contains the ribosomal catalytic site termed the peptidyl transferase center (PTC), which catalyzes the formation of peptide bonds, thereby polymerizing the amino acids delivered by tRNAs into a polypeptide chain. The nascent polypeptides leave the ribosome through a tunnel in the LSU and interact with protein factors that function in enzymatic processing, targeting, and the membrane insertion of nascent chains at the exit of the ribosomal tunnel. The protein is Large ribosomal subunit protein eL8A of Candida albicans (strain SC5314 / ATCC MYA-2876) (Yeast).